A 223-amino-acid chain; its full sequence is Translation initiation factor 6 (223 aa).

Belongs to the eIF-6 family.

Its function is as follows. Binds to the 50S ribosomal subunit and prevents its association with the 30S ribosomal subunit to form the 70S initiation complex. The chain is Translation initiation factor 6 from Sulfurisphaera tokodaii (strain DSM 16993 / JCM 10545 / NBRC 100140 / 7) (Sulfolobus tokodaii).